The following is a 215-amino-acid chain: UPF0502 protein YceH (215 aa).

N6-acetyllysine is present on lysine 80.

It belongs to the UPF0502 family.

This Shigella boydii serotype 4 (strain Sb227) protein is UPF0502 protein YceH.